The sequence spans 275 residues: Thiazole synthase (275 aa).

The active-site Schiff-base intermediate with DXP is Lys-108. 1-deoxy-D-xylulose 5-phosphate contacts are provided by residues Gly-169, 196 to 197 (AG), and 218 to 219 (NT).

Belongs to the ThiG family. In terms of assembly, homotetramer. Forms heterodimers with either ThiH or ThiS.

The protein localises to the cytoplasm. The enzyme catalyses [ThiS sulfur-carrier protein]-C-terminal-Gly-aminoethanethioate + 2-iminoacetate + 1-deoxy-D-xylulose 5-phosphate = [ThiS sulfur-carrier protein]-C-terminal Gly-Gly + 2-[(2R,5Z)-2-carboxy-4-methylthiazol-5(2H)-ylidene]ethyl phosphate + 2 H2O + H(+). Its pathway is cofactor biosynthesis; thiamine diphosphate biosynthesis. Its function is as follows. Catalyzes the rearrangement of 1-deoxy-D-xylulose 5-phosphate (DXP) to produce the thiazole phosphate moiety of thiamine. Sulfur is provided by the thiocarboxylate moiety of the carrier protein ThiS. In vitro, sulfur can be provided by H(2)S. In Ralstonia nicotianae (strain ATCC BAA-1114 / GMI1000) (Ralstonia solanacearum), this protein is Thiazole synthase.